The primary structure comprises 1499 residues: Ring canal kelch homolog (1499 aa).

Positions 56-66 (LDESSQKQLPR) are enriched in polar residues. A disordered region spans residues 56 to 75 (LDESSQKQLPRSNGKEKTTG). Residues 100–166 (CDVVLVAEGI…VYRAVVEVTE (67 aa)) enclose the BTB domain. 6 Kelch repeats span residues 351 to 396 (VLLV…VLGD), 397 to 443 (KVYA…VLNN), 444 to 490 (CIYA…VVNG), 492 to 539 (LYAV…VLDN), 541 to 586 (LYAV…AHNG), and 588 to 634 (LYVV…MIDK). Residue U637 is a non-standard amino acid, selenocysteine. 8 disordered regions span residues 679-714 (AGQA…GNNV), 750-786 (LQYA…GGGG), 825-856 (AGYD…CPNL), 984-1017 (NQSN…SSSV), 1033-1085 (SMNN…GNGG), 1107-1160 (ASTS…PVDV), 1301-1321 (QVGR…PLRT), and 1334-1499 (ARSP…TASE). Positions 698 to 713 (NPEPANSNNSAPNGNN) are enriched in low complexity. Residues 776–786 (GERGAVGGGGG) show a composition bias toward gly residues. Positions 986–1003 (SNSSSASSASPYGANGPA) are enriched in low complexity. Residues 1004–1017 (TTSQPNPTKDSSSV) are compositionally biased toward polar residues. Residues 1040–1054 (SSAAHGTASGSAPAA) are compositionally biased toward low complexity. The segment covering 1065 to 1085 (ISGGASGGGAGGAGSSGGNGG) has biased composition (gly residues). A compositionally biased stretch (low complexity) spans 1107 to 1119 (ASTSTTLGGKSTG). Residues 1135–1147 (GPSDPTAGTSAPQ) are compositionally biased toward polar residues. Over residues 1348–1359 (NREKPREVRRIT) the composition is skewed to basic and acidic residues. The span at 1401–1410 (SSASSSSDSD) shows a compositional bias: low complexity. Polar residues predominate over residues 1460–1471 (VGSSSNETSDSL).

The protein localises to the cytoplasm. It is found in the cytoskeleton. Functionally, may play a role in organizing the actin cytoskeleton. The chain is Ring canal kelch homolog from Anopheles stephensi (Indo-Pakistan malaria mosquito).